Reading from the N-terminus, the 665-residue chain is DNA mismatch repair protein MutL (665 aa).

The protein belongs to the DNA mismatch repair MutL/HexB family.

Functionally, this protein is involved in the repair of mismatches in DNA. It is required for dam-dependent methyl-directed DNA mismatch repair. May act as a 'molecular matchmaker', a protein that promotes the formation of a stable complex between two or more DNA-binding proteins in an ATP-dependent manner without itself being part of a final effector complex. This Acidobacterium capsulatum (strain ATCC 51196 / DSM 11244 / BCRC 80197 / JCM 7670 / NBRC 15755 / NCIMB 13165 / 161) protein is DNA mismatch repair protein MutL.